Here is an 837-residue protein sequence, read N- to C-terminus: Endo-1,4-beta-xylanase Z (837 aa).

Residues 1 to 28 (MSRKLFSVLLVGLMLMTSLLVTISSTSA) form the signal peptide. Positions 299-420 (TRIEAEDYDG…PVNIDWFTFG (122 aa)) constitute a CBM6 domain. One can recognise a Dockerin domain in the interval 424–492 (SSTGLGDLNG…ILRIITEFPG (69 aa)). In terms of domain architecture, GH10 spans 512–833 (TISGNALRDY…KPAYNAIKEA (322 aa)). Catalysis depends on Glu645, which acts as the Proton donor. Glu754 (nucleophile) is an active-site residue. The cysteines at positions 783 and 789 are disulfide-linked.

It belongs to the glycosyl hydrolase 10 (cellulase F) family.

It carries out the reaction Endohydrolysis of (1-&gt;4)-beta-D-xylosidic linkages in xylans.. This Acetivibrio thermocellus (strain ATCC 27405 / DSM 1237 / JCM 9322 / NBRC 103400 / NCIMB 10682 / NRRL B-4536 / VPI 7372) (Clostridium thermocellum) protein is Endo-1,4-beta-xylanase Z (xynZ).